The primary structure comprises 89 residues: Strongylocin 2 (89 aa).

The signal sequence occupies residues 1–22 (MNIRTASFTFIVVMMILSQTMA). A propeptide spanning residues 23-38 (DRFFNEPEEDDHLVES) is cleaved from the precursor. 6'-bromotryptophan is present on tryptophan 39.

In terms of processing, contains 3 disulfide bonds.

Has antimicrobial activity against Gram-negative bacteria and Gram-positive bacteria with minimum inhibitory concentration (MIC) between 0.78 uM and 3.13 uM. The protein is Strongylocin 2 of Echinus esculentus (Sea urchin).